The following is a 240-amino-acid chain: Ribitol-5-phosphate cytidylyltransferase (240 aa).

CTP contacts are provided by residues 8-11 and 81-87; these read FAGG and GETGQMS.

Belongs to the IspD/TarI cytidylyltransferase family. TarI subfamily.

It catalyses the reaction D-ribitol 5-phosphate + CTP + H(+) = CDP-L-ribitol + diphosphate. The protein operates within cell wall biogenesis; poly(ribitol phosphate) teichoic acid biosynthesis. Functionally, catalyzes the transfer of the cytidylyl group of CTP to D-ribitol 5-phosphate. The chain is Ribitol-5-phosphate cytidylyltransferase from Streptococcus agalactiae serotype V (strain ATCC BAA-611 / 2603 V/R).